A 2167-amino-acid chain; its full sequence is Myosin-VIIa (2167 aa).

The Myosin motor domain occupies 63 to 733; sequence QGVEDMISLG…HDLFLEQERD (671 aa). 156-163 contributes to the ATP binding site; it reads GESGAGKT. 2 actin-binding regions span residues 612 to 634 and 712 to 726; these read LDALMKTLSSCQPFFIRCIKPNE and QLGHTKVFLKDAHDL. IQ domains lie at 736–758, 759–788, 805–827, and 828–857; these read LTRKILILQRSIRGWVYRRRFLR, LRAAAITVQRFWKGYAQRKRYRNMRVGYMR, LRGHIVGLQAHARGYLVRREYGH, and KMWAVIKIQSHVRRMIAMRRYRKLRLEHKQ. The stretch at 886-919 forms a coiled coil; the sequence is QHYRDRLHELERREIQEQLENRRRVEVNMNIIND. The MyTH4 1 domain occupies 1008-1245; it reads YAKKALKHPL…PSWLELQATK (238 aa). Residues 1250–1560 enclose the FERM 1 domain; it reads IMLPITFMDG…YFLDGLKKRS (311 aa). The region spanning 1558-1627 is the SH3 domain; sequence KRSKYVIALQ…PAETVYVLPT (70 aa). Phosphoserine is present on residues serine 1651 and serine 1654. Residues 1701–1849 form the MyTH4 2 domain; the sequence is YSRDPIKAPL…PHQVEVEAIQ (149 aa). The FERM 2 domain maps to 1855 to 2158; the sequence is IFHKVYFPDD…SYISLMLTNM (304 aa). Position 2045 is a phosphothreonine (threonine 2045).

This sequence belongs to the TRAFAC class myosin-kinesin ATPase superfamily. Myosin family. Homodimerizes in a two headed molecule through the formation of a coiled-coil rod. Homodimers motility is approximately 8-10 times slower than that of myosin V, and its step size is 30 nm, which is consistent with the presence of five IQ motifs in its neck region. Interacts with Cad99C (via the cytoplasmic domain). Interacts with zip and Sans. As to expression, expressed in the setae, micro- and macrochaetae on the head, thorax and wing.

It localises to the cytoplasm. Its subcellular location is the cell cortex. It is found in the cell projection. The protein localises to the microvillus. Myosins are actin-based motor molecules with ATPase activity. Unconventional myosins serve in intracellular movements: can function in cells as a single-molecule cargo transporter. A very slow and high-duty-ratio motor, may be suitable for tension maintenance of actin filaments. Their highly divergent tails are presumed to bind to membranous compartments, which would be moved relative to actin filaments. Plays a key role in the formation of cellular projections and other actin-based functions required for embryonic and larval viability. Necessary for auditory transduction: plays a role in Johnston's organ organization by functioning in scolopidial apical attachment and therefore to acoustic stimulus propagation from the antenna a2/a3 joint to transducing elements. Interaction with the myosin zip may be important for its function in scolopidial apical attachment. During oogenesis it has Cad99c-dependent and Cad99c-independent roles in regulating the shape and spacing of the follicle cell microvilli which secrete eggshell material such as the vitelline membrane. May be required for the normal expression of Cad99c in the follicle cell microvilli. The chain is Myosin-VIIa from Drosophila melanogaster (Fruit fly).